Reading from the N-terminus, the 336-residue chain is Calcium-gated potassium channel MthK (336 aa).

Residues 1–20 (MVLVIEIIRKHLPRVLKVPA) lie on the Cytoplasmic side of the membrane. Residues 21-41 (TRILLLVLAVIIYGTAGFHFI) form a helical membrane-spanning segment. The Extracellular portion of the chain corresponds to 42–48 (EGESWTV). The helical; Pore-forming intramembrane region spans 49-58 (SLYWTFVTIA). Positions 59–64 (TVGYGD) form an intramembrane region, pore-forming. The short motif at 59 to 64 (TVGYGD) is the Selectivity filter element. Over 65-69 (YSPST) the chain is Extracellular. A helical membrane pass occupies residues 70-95 (PLGMYFTVTLIVLGIGTFAVAVERLL). The Cytoplasmic portion of the chain corresponds to 96 to 106 (EFLINREQMKL). One can recognise an RCK N-terminal domain in the interval 115-230 (SRHVVICGWS…RMAGADQVIS (116 aa)). Positions 184, 210, and 212 each coordinate Ca(2+). The RCK C-terminal domain occupies 252 to 336 (VQDVLAEEST…IERLKNYISA (85 aa)).

As to quaternary structure, homotetramer.

It localises to the cell membrane. In terms of biological role, calcium-gated potassium channel. This Methanothermobacter thermautotrophicus (strain ATCC 29096 / DSM 1053 / JCM 10044 / NBRC 100330 / Delta H) (Methanobacterium thermoautotrophicum) protein is Calcium-gated potassium channel MthK (mthK).